The sequence spans 353 residues: 4-hydroxy-3-methylbut-2-en-1-yl diphosphate synthase (flavodoxin) (353 aa).

The [4Fe-4S] cluster site is built by Cys-268, Cys-271, Cys-303, and Glu-310.

Belongs to the IspG family. Requires [4Fe-4S] cluster as cofactor.

It catalyses the reaction (2E)-4-hydroxy-3-methylbut-2-enyl diphosphate + oxidized [flavodoxin] + H2O + 2 H(+) = 2-C-methyl-D-erythritol 2,4-cyclic diphosphate + reduced [flavodoxin]. It participates in isoprenoid biosynthesis; isopentenyl diphosphate biosynthesis via DXP pathway; isopentenyl diphosphate from 1-deoxy-D-xylulose 5-phosphate: step 5/6. Its function is as follows. Converts 2C-methyl-D-erythritol 2,4-cyclodiphosphate (ME-2,4cPP) into 1-hydroxy-2-methyl-2-(E)-butenyl 4-diphosphate. This chain is 4-hydroxy-3-methylbut-2-en-1-yl diphosphate synthase (flavodoxin), found in Ruminiclostridium cellulolyticum (strain ATCC 35319 / DSM 5812 / JCM 6584 / H10) (Clostridium cellulolyticum).